The following is a 130-amino-acid chain: uncharacterized protein (130 aa).

The tract at residues 1-34 (MTAVGGSPPTRRCPATEDRAPATVATPSSTDPTA) is disordered.

The protein to M.tuberculosis Rv1583c.

This is an uncharacterized protein from Mycobacterium tuberculosis (strain CDC 1551 / Oshkosh).